A 472-amino-acid chain; its full sequence is Phosphoglucosamine mutase (472 aa).

Serine 123 (phosphoserine intermediate) is an active-site residue. Mg(2+)-binding residues include serine 123, aspartate 262, aspartate 264, and aspartate 266. Serine 123 carries the post-translational modification Phosphoserine.

This sequence belongs to the phosphohexose mutase family. It depends on Mg(2+) as a cofactor. Post-translationally, activated by phosphorylation.

It catalyses the reaction alpha-D-glucosamine 1-phosphate = D-glucosamine 6-phosphate. Catalyzes the conversion of glucosamine-6-phosphate to glucosamine-1-phosphate. In Synechococcus elongatus (strain ATCC 33912 / PCC 7942 / FACHB-805) (Anacystis nidulans R2), this protein is Phosphoglucosamine mutase.